A 61-amino-acid polypeptide reads, in one-letter code: Large ribosomal subunit protein uL30 (61 aa).

This sequence belongs to the universal ribosomal protein uL30 family. As to quaternary structure, part of the 50S ribosomal subunit.

This is Large ribosomal subunit protein uL30 from Chlorobaculum tepidum (strain ATCC 49652 / DSM 12025 / NBRC 103806 / TLS) (Chlorobium tepidum).